The primary structure comprises 408 residues: Arginine biosynthesis bifunctional protein ArgJ (408 aa).

Substrate is bound by residues T156, K182, T193, E279, N403, and S408. The Nucleophile role is filled by T193.

This sequence belongs to the ArgJ family. Heterotetramer of two alpha and two beta chains.

The protein localises to the cytoplasm. The catalysed reaction is N(2)-acetyl-L-ornithine + L-glutamate = N-acetyl-L-glutamate + L-ornithine. It carries out the reaction L-glutamate + acetyl-CoA = N-acetyl-L-glutamate + CoA + H(+). It participates in amino-acid biosynthesis; L-arginine biosynthesis; L-ornithine and N-acetyl-L-glutamate from L-glutamate and N(2)-acetyl-L-ornithine (cyclic): step 1/1. The protein operates within amino-acid biosynthesis; L-arginine biosynthesis; N(2)-acetyl-L-ornithine from L-glutamate: step 1/4. Its function is as follows. Catalyzes two activities which are involved in the cyclic version of arginine biosynthesis: the synthesis of N-acetylglutamate from glutamate and acetyl-CoA as the acetyl donor, and of ornithine by transacetylation between N(2)-acetylornithine and glutamate. This chain is Arginine biosynthesis bifunctional protein ArgJ, found in Bordetella pertussis (strain Tohama I / ATCC BAA-589 / NCTC 13251).